Reading from the N-terminus, the 206-residue chain is Flavin reductase (NADPH) (206 aa).

NADP(+) is bound by residues G10, T12, G13, N14, T15, R35, S38, and R39. Position 42 is a phosphoserine (S42). The NADP(+) site is built by D54, V55, L75, G76, and R78. S82 bears the Phosphoserine mark. M87, C109, H132, H153, and I154 together coordinate NADP(+). Residue C109 is the S-nitroso-cysteine intermediate; for S-nitroso-CoA-dependent nitrosyltransferase activity of the active site. Catalysis depends on C188, which acts as the S-nitroso-cysteine intermediate; for S-nitroso-CoA-dependent nitrosyltransferase activity.

As to quaternary structure, monomer. In terms of tissue distribution, at least expressed in the liver and erythrocyte.

The protein resides in the cytoplasm. It carries out the reaction reduced riboflavin + NADP(+) = riboflavin + NADPH + 2 H(+). The catalysed reaction is bilirubin IXbeta + NADP(+) = biliverdin IXbeta + NADPH + H(+). The enzyme catalyses FMNH2 + NAD(+) = FMN + NADH + 2 H(+). It catalyses the reaction FMNH2 + NADP(+) = FMN + NADPH + 2 H(+). It carries out the reaction S-nitroso-CoA + L-cysteinyl-[protein] = S-nitroso-L-cysteinyl-[protein] + CoA. The catalysed reaction is L-cysteinyl-[SCAN] + S-nitroso-CoA = S-nitroso-L-cysteinyl-[SCAN] + CoA. The enzyme catalyses S-nitroso-L-cysteinyl-[SCAN] + L-cysteinyl-[protein] = L-cysteinyl-[SCAN] + S-nitroso-L-cysteinyl-[protein]. Functionally, enzyme that can both act as a NAD(P)H-dependent reductase and a S-nitroso-CoA-dependent nitrosyltransferase. Promotes fetal heme degradation during development. Also expressed in adult tissues, where it acts as a regulator of hematopoiesis, intermediary metabolism (glutaminolysis, glycolysis, TCA cycle and pentose phosphate pathway) and insulin signaling. Has a broad specificity oxidoreductase activity by catalyzing the NAD(P)H-dependent reduction of a variety of flavins, such as riboflavin, FAD or FMN, biliverdins, methemoglobin and PQQ (pyrroloquinoline quinone). Contributes to fetal heme catabolism by catalyzing reduction of biliverdin IXbeta into bilirubin IXbeta in the liver. Biliverdin IXbeta, which constitutes the major heme catabolite in the fetus is not present in adult. Does not reduce bilirubin IXalpha. Can also reduce the complexed Fe(3+) iron to Fe(2+) in the presence of FMN and NADPH. Acts as a protein nitrosyltransferase by catalyzing nitrosylation of cysteine residues of target proteins, such as HMOX2, INSR and IRS1. S-nitroso-CoA-dependent nitrosyltransferase activity is mediated via a 'ping-pong' mechanism: BLVRB first associates with both S-nitroso-CoA and protein substrate, nitric oxide group is then transferred from S-nitroso-CoA to Cys-109 and Cys-188 residues of BLVRB and from S-nitroso-BLVRB to the protein substrate. Inhibits insulin signaling by mediating nitrosylation of INSR and IRS1, leading to their inhibition. In Bos taurus (Bovine), this protein is Flavin reductase (NADPH) (BLVRB).